The primary structure comprises 541 residues: Chaperonin GroEL (541 aa).

Residues 29 to 32, 86 to 90, G413, 476 to 478, and D492 contribute to the ATP site; these read TLGP, DGTTT, and NAA.

It belongs to the chaperonin (HSP60) family. In terms of assembly, forms a cylinder of 14 subunits composed of two heptameric rings stacked back-to-back. Interacts with the co-chaperonin GroES.

It localises to the cytoplasm. It carries out the reaction ATP + H2O + a folded polypeptide = ADP + phosphate + an unfolded polypeptide.. Its function is as follows. Together with its co-chaperonin GroES, plays an essential role in assisting protein folding. The GroEL-GroES system forms a nano-cage that allows encapsulation of the non-native substrate proteins and provides a physical environment optimized to promote and accelerate protein folding. This Streptococcus equi subsp. zooepidemicus (strain MGCS10565) protein is Chaperonin GroEL.